Reading from the N-terminus, the 256-residue chain is Putative ankyrin repeat protein PAE1861 (256 aa).

ANK repeat units follow at residues 1–30 (MDCN…SPDV), 34–63 (YGRT…DPNA), 67–92 (EGKT…ASAV), 93–122 (GVEE…RPGA), 124–151 (HGES…DPNA), 155–184 (HGKT…DVNV), 188–214 (AGRT…DLNA), and 218–245 (MGRT…PVPD).

The sequence is that of Putative ankyrin repeat protein PAE1861 from Pyrobaculum aerophilum (strain ATCC 51768 / DSM 7523 / JCM 9630 / CIP 104966 / NBRC 100827 / IM2).